Consider the following 185-residue polypeptide: ATP-dependent protease subunit HslV (185 aa).

The active site involves T14. Residues A168, C171, and T174 each contribute to the Na(+) site.

This sequence belongs to the peptidase T1B family. HslV subfamily. A double ring-shaped homohexamer of HslV is capped on each side by a ring-shaped HslU homohexamer. The assembly of the HslU/HslV complex is dependent on binding of ATP.

It localises to the cytoplasm. The catalysed reaction is ATP-dependent cleavage of peptide bonds with broad specificity.. Its activity is regulated as follows. Allosterically activated by HslU binding. Functionally, protease subunit of a proteasome-like degradation complex believed to be a general protein degrading machinery. This Hyphomonas neptunium (strain ATCC 15444) protein is ATP-dependent protease subunit HslV.